The following is a 525-amino-acid chain: GMP synthase [glutamine-hydrolyzing] (525 aa).

In terms of domain architecture, Glutamine amidotransferase type-1 spans 7 to 207 (RILVIDFGSQ…ITCICRCKSS (201 aa)). The active-site Nucleophile is Cys-84. Catalysis depends on residues His-181 and Glu-183. Residues 208 to 400 (WKIANIIDDI…LGIPYDIAYR (193 aa)) form the GMPS ATP-PPase domain. Residue 235–241 (SGGIDSL) participates in ATP binding.

Homodimer.

The enzyme catalyses XMP + L-glutamine + ATP + H2O = GMP + L-glutamate + AMP + diphosphate + 2 H(+). It participates in purine metabolism; GMP biosynthesis; GMP from XMP (L-Gln route): step 1/1. Catalyzes the synthesis of GMP from XMP. In Blochmanniella pennsylvanica (strain BPEN), this protein is GMP synthase [glutamine-hydrolyzing].